Here is a 465-residue protein sequence, read N- to C-terminus: MATSHPDPTTSRHVAVIGAGAAGLVAARELRREGHSVVVLERGSQIGGVWAYTSQVEPDPLSLDPTRPVVHSSLYRSLRTNIPRECMGFTDFPFATRPHDGSRDPRRHPAHTEVLAYLRDFAKEFDIEEMVRFETEVVKAEQVAAEGEERGKWRVESRSSDGVVDEIYDAVVVCNGHYTEPRHALITGIDSWPGKQIHSHNYRVPDQFKDQVVIVIGSSASGVDICRDIAQVAKEVHVSSRSTSPDTYEKLTGYENLWLHSTIQIAREDGSVVFENGKTIYADTIMHCTGYKYYFPFLDTKGEVTVDDNRVGPLYKHVFPPALAPSLSFIGLPWQITPFPMFELQSKWVAAVLSGRVSLPSQDEMMEDTKAFYDKLEASGIPKRYTHLMPDDSQFEYDNWLADQCEYPRIEKWREQMFYIGFKRIYAQSSTYRDNWDDDHLIVEAYDDFVKFMSSYQELLPMLKT.

An FAD-binding site is contributed by 18 to 23 (GAGAAG). An NADP(+)-binding site is contributed by 217 to 222 (GSSASG).

Belongs to the FMO family. FAD serves as cofactor.

Functionally, catalyzes the conversion of methylthioalkyl glucosinolates of any chain length into methylsulfinylalkyl glucosinolates. The polypeptide is Flavin-containing monooxygenase FMO GS-OX-like 2 (Arabidopsis thaliana (Mouse-ear cress)).